We begin with the raw amino-acid sequence, 100 residues long: Small ribosomal subunit protein uS14c (100 aa).

This sequence belongs to the universal ribosomal protein uS14 family. In terms of assembly, part of the 30S ribosomal subunit.

It is found in the plastid. The protein resides in the chloroplast. Functionally, binds 16S rRNA, required for the assembly of 30S particles. This Guillardia theta (Cryptophyte) protein is Small ribosomal subunit protein uS14c.